The chain runs to 154 residues: 6,7-dimethyl-8-ribityllumazine synthase (154 aa).

Residues F26, 60-62 (ALE), and 84-86 (CII) contribute to the 5-amino-6-(D-ribitylamino)uracil site. 89-90 (ET) is a (2S)-2-hydroxy-3-oxobutyl phosphate binding site. H92 functions as the Proton donor in the catalytic mechanism. Residue N117 participates in 5-amino-6-(D-ribitylamino)uracil binding. Residue R131 coordinates (2S)-2-hydroxy-3-oxobutyl phosphate.

It belongs to the DMRL synthase family.

The catalysed reaction is (2S)-2-hydroxy-3-oxobutyl phosphate + 5-amino-6-(D-ribitylamino)uracil = 6,7-dimethyl-8-(1-D-ribityl)lumazine + phosphate + 2 H2O + H(+). Its pathway is cofactor biosynthesis; riboflavin biosynthesis; riboflavin from 2-hydroxy-3-oxobutyl phosphate and 5-amino-6-(D-ribitylamino)uracil: step 1/2. Functionally, catalyzes the formation of 6,7-dimethyl-8-ribityllumazine by condensation of 5-amino-6-(D-ribitylamino)uracil with 3,4-dihydroxy-2-butanone 4-phosphate. This is the penultimate step in the biosynthesis of riboflavin. This is 6,7-dimethyl-8-ribityllumazine synthase from Acidovorax ebreus (strain TPSY) (Diaphorobacter sp. (strain TPSY)).